A 355-amino-acid polypeptide reads, in one-letter code: Uroporphyrinogen decarboxylase (355 aa).

Residues Arg-36–Arg-40, Asp-85, Tyr-160, Ser-215, and His-334 each bind substrate.

This sequence belongs to the uroporphyrinogen decarboxylase family. In terms of assembly, homodimer.

It localises to the cytoplasm. The catalysed reaction is uroporphyrinogen III + 4 H(+) = coproporphyrinogen III + 4 CO2. Its pathway is porphyrin-containing compound metabolism; protoporphyrin-IX biosynthesis; coproporphyrinogen-III from 5-aminolevulinate: step 4/4. Catalyzes the decarboxylation of four acetate groups of uroporphyrinogen-III to yield coproporphyrinogen-III. This chain is Uroporphyrinogen decarboxylase, found in Rhodococcus jostii (strain RHA1).